Here is a 647-residue protein sequence, read N- to C-terminus: Nucleoside triphosphatase I (647 aa).

Positions 48 to 213 (FIGLSELNSL…KYLINLLRPK (166 aa)) constitute a Helicase ATP-binding domain. 61–68 (WDTGYGKT) serves as a coordination point for ATP. Residues 150–153 (DEVH) carry the DEXH box motif. Residues 377-540 (YIEACKIILN…KINVLNSFMK (164 aa)) form the Helicase C-terminal domain. The interval 466–532 (DIIILDLPWK…DLIKSKQDKI (67 aa)) is binding to the cap-specific mRNA (nucleoside-2'-O-)-methyltransferase.

It belongs to the helicase family. NPH I subfamily. In terms of assembly, monomer. Interacts (via C-terminus) with RAP94 (via N-terminus). Interacts with the cap-specific mRNA (nucleoside-2'-O-)-methyltransferase.

It localises to the virion. The enzyme catalyses a ribonucleoside 5'-triphosphate + H2O = a ribonucleoside 5'-diphosphate + phosphate + H(+). DNA-dependent ATPase required for providing the needed energy to achieve the termination of early transcripts. Acts in concert with the RAP94 subunit of the virion RNA polymerase and the capping enzyme/VTF to catalyze release of UUUUUNU-containing nascent RNA from the elongation complex. NPH-I must bind ssDNA in order to exhibit ATPase activity. The chain is Nucleoside triphosphatase I (NPH1) from Melanoplus sanguinipes entomopoxvirus (MsEPV).